The chain runs to 496 residues: Polyphosphate:AMP phosphotransferase (496 aa).

2 PPK2 regions span residues 11–234 (IDKD…LQAA) and 269–495 (LDKD…YKKD).

The protein belongs to the polyphosphate kinase 2 (PPK2) family. Class II subfamily. As to quaternary structure, homodimer. It depends on Mg(2+) as a cofactor.

It catalyses the reaction [phosphate](n) + ADP = [phosphate](n+1) + AMP. In terms of biological role, uses inorganic polyphosphate (polyP) as a donor to convert AMP to ADP. Can also convert GMP to GDP, with lower efficiency. Cannot dephosphorylate ADP in the presence of polyP. The protein is Polyphosphate:AMP phosphotransferase of Pseudomonas aeruginosa (strain ATCC 15692 / DSM 22644 / CIP 104116 / JCM 14847 / LMG 12228 / 1C / PRS 101 / PAO1).